The sequence spans 324 residues: Heat-inducible transcription repressor HrcA (324 aa).

It belongs to the HrcA family.

In terms of biological role, negative regulator of class I heat shock genes (grpE-dnaK-dnaJ and groELS operons). Prevents heat-shock induction of these operons. The sequence is that of Heat-inducible transcription repressor HrcA from Parasynechococcus marenigrum (strain WH8102).